The sequence spans 513 residues: MQLNSTEISELIKKRIAQFDVVSEARNTGTIVSVSDGIIRIHGLSDVMQGEMIALPGNRYAMALNLERDSVGAVVMGPYADLAEGMEVQCTGRILEVPVGRGLLGRVVNTLGQPIDGKGEIENDGFSPVEVIAPGVIDRRSVDQPVQTGYKAVDSMVPIGRGQRELIIGDRQTGKTALAIDAIINQRNSGIKCIYVAIGQKASTIANVVRKLEEHGALANTIVVAASASESAALQYLAPYAGCAMGEYFRDRGEDALIVYDDLSKQAVAYRQISLLLRRPPGREAYPGDVFYLHSRLLERASRVNEDYVEKFTKGEVKGKTGSLTALPIIETQAGDVSAFVPTNVISITDGQIFLESNLFNSGIRPAVNPGISVSRVGGSAQTKVIKKLAGGIRTALAQYRELAAFAQFASDLDDATRKQLSHGEKVTELLKQKQFAPLSVAEQAVVLFAVEFGYLDDVELSKIASFETALLDYSNRNHAEFMQELNKTGNYNDEIKDTLKGILDSFKANSAW.

169–176 is a binding site for ATP; it reads GDRQTGKT.

Belongs to the ATPase alpha/beta chains family. F-type ATPases have 2 components, CF(1) - the catalytic core - and CF(0) - the membrane proton channel. CF(1) has five subunits: alpha(3), beta(3), gamma(1), delta(1), epsilon(1). CF(0) has three main subunits: a(1), b(2) and c(9-12). The alpha and beta chains form an alternating ring which encloses part of the gamma chain. CF(1) is attached to CF(0) by a central stalk formed by the gamma and epsilon chains, while a peripheral stalk is formed by the delta and b chains.

It is found in the cell inner membrane. It catalyses the reaction ATP + H2O + 4 H(+)(in) = ADP + phosphate + 5 H(+)(out). In terms of biological role, produces ATP from ADP in the presence of a proton gradient across the membrane. The alpha chain is a regulatory subunit. The protein is ATP synthase subunit alpha of Haemophilus influenzae (strain PittEE).